The sequence spans 754 residues: Phosphoribosylformylglycinamidine synthase subunit PurL (754 aa).

The active site involves His-54. ATP contacts are provided by Tyr-57 and Lys-101. Glu-103 lines the Mg(2+) pocket. Substrate-binding positions include 104–107 (SHNH) and Arg-126. Residue His-105 is the Proton acceptor of the active site. Asp-127 is a binding site for Mg(2+). Residue Gln-252 coordinates substrate. Mg(2+) is bound at residue Asp-280. Residue 324–326 (ESQ) participates in substrate binding. A disordered region spans residues 386–412 (PVYQRPVSRPESQEALNADSSKGLPRP). ATP contacts are provided by Asn-512 and Gly-549. Residue Asn-550 coordinates Mg(2+). Ser-552 contributes to the substrate binding site.

The protein belongs to the FGAMS family. As to quaternary structure, monomer. Part of the FGAM synthase complex composed of 1 PurL, 1 PurQ and 2 PurS subunits.

The protein resides in the cytoplasm. It catalyses the reaction N(2)-formyl-N(1)-(5-phospho-beta-D-ribosyl)glycinamide + L-glutamine + ATP + H2O = 2-formamido-N(1)-(5-O-phospho-beta-D-ribosyl)acetamidine + L-glutamate + ADP + phosphate + H(+). It participates in purine metabolism; IMP biosynthesis via de novo pathway; 5-amino-1-(5-phospho-D-ribosyl)imidazole from N(2)-formyl-N(1)-(5-phospho-D-ribosyl)glycinamide: step 1/2. Part of the phosphoribosylformylglycinamidine synthase complex involved in the purines biosynthetic pathway. Catalyzes the ATP-dependent conversion of formylglycinamide ribonucleotide (FGAR) and glutamine to yield formylglycinamidine ribonucleotide (FGAM) and glutamate. The FGAM synthase complex is composed of three subunits. PurQ produces an ammonia molecule by converting glutamine to glutamate. PurL transfers the ammonia molecule to FGAR to form FGAM in an ATP-dependent manner. PurS interacts with PurQ and PurL and is thought to assist in the transfer of the ammonia molecule from PurQ to PurL. This Mycobacterium leprae (strain Br4923) protein is Phosphoribosylformylglycinamidine synthase subunit PurL.